The chain runs to 511 residues: Alpha-amylase 2B (511 aa).

An N-terminal signal peptide occupies residues 1–15; the sequence is MKFFLLLFTIGFCWA. Residue Gln-16 is modified to Pyrrolidone carboxylic acid. 3 disulfides stabilise this stretch: Cys-43-Cys-101, Cys-85-Cys-130, and Cys-156-Cys-175. Ca(2+) is bound by residues Asn-115, Arg-173, and Asp-182. Chloride is bound at residue Arg-210. Catalysis depends on Asp-212, which acts as the Nucleophile. His-216 contributes to the Ca(2+) binding site. Glu-248 acts as the Proton donor in catalysis. Asn-313 and Arg-352 together coordinate chloride. Intrachain disulfides connect Cys-393–Cys-399 and Cys-465–Cys-477.

This sequence belongs to the glycosyl hydrolase 13 family. In terms of assembly, monomer. Ca(2+) serves as cofactor. Chloride is required as a cofactor.

The protein localises to the secreted. The enzyme catalyses Endohydrolysis of (1-&gt;4)-alpha-D-glucosidic linkages in polysaccharides containing three or more (1-&gt;4)-alpha-linked D-glucose units.. The chain is Alpha-amylase 2B (AMY2B) from Homo sapiens (Human).